Here is a 365-residue protein sequence, read N- to C-terminus: Probable flavin mononucleotide-dependent alkene reductase (365 aa).

Residues P30 to T32, A63, and Q105 contribute to the FMN site. Y191 acts as the Proton donor in catalysis. FMN-binding positions include R238, S303, and G324–T325.

This sequence belongs to the NADH:flavin oxidoreductase/NADH oxidase family. Monomer. Requires FMN as cofactor.

Its subcellular location is the cytoplasm. The protein resides in the cytosol. Its function is as follows. May function as a flavin mononucleotide (FMN)-dependent alkene reductase on substrates carrying alpha,beta-unsaturated carbonyl groups (ketones, aldehydes, carboxylic acids, esters, lactones or cyclic imides). The catalysis depends on NAD(P)H, which acts as a hydride donor for the reduction. Seems to be involved in metabolic pathways required for efficient replication of amastigotes within macrophages. Functionally, acts as a FMN-dependent nitroreductase that activates anti-leishmanial bicyclic nitroaromatic prodrugs including delamanid, DNDI-VL-2098 and (R)-PA-824, forming toxic products that kill the parasites. The chain is Probable flavin mononucleotide-dependent alkene reductase from Leishmania infantum.